A 426-amino-acid chain; its full sequence is Enolase (426 aa).

Gln163 contributes to the (2R)-2-phosphoglycerate binding site. Catalysis depends on Glu205, which acts as the Proton donor. Mg(2+)-binding residues include Asp242, Glu283, and Asp310. Positions 335, 364, 365, and 386 each coordinate (2R)-2-phosphoglycerate. The active-site Proton acceptor is Lys335.

It belongs to the enolase family. The cofactor is Mg(2+).

The protein localises to the cytoplasm. It localises to the secreted. It is found in the cell surface. The enzyme catalyses (2R)-2-phosphoglycerate = phosphoenolpyruvate + H2O. The protein operates within carbohydrate degradation; glycolysis; pyruvate from D-glyceraldehyde 3-phosphate: step 4/5. Its function is as follows. Catalyzes the reversible conversion of 2-phosphoglycerate (2-PG) into phosphoenolpyruvate (PEP). It is essential for the degradation of carbohydrates via glycolysis. This chain is Enolase, found in Cutibacterium acnes (strain DSM 16379 / KPA171202) (Propionibacterium acnes).